A 238-amino-acid polypeptide reads, in one-letter code: CBS domain-containing protein CBSX2, chloroplastic (238 aa).

Residues methionine 1–proline 71 constitute a chloroplast transit peptide. 2 consecutive CBS domains span residues methionine 83–threonine 145 and methionine 177–threonine 234.

The protein localises to the plastid. Its subcellular location is the chloroplast stroma. The chain is CBS domain-containing protein CBSX2, chloroplastic (CBSX2) from Arabidopsis thaliana (Mouse-ear cress).